A 203-amino-acid chain; its full sequence is Ras-related protein Rab-7L1 (203 aa).

The GTP site is built by S33, K34, H35, Y36, K37, and T39. Positions 36–44 match the Effector region motif; that stretch reads YKSTVGVDF. At T71 the chain carries Phosphothreonine; by LRRK2. S72 is subject to Phosphoserine; by LRRK2. Residues K126, V156, and K157 each contribute to the GTP site. 2 S-geranylgeranyl cysteine lipidation sites follow: C202 and C203.

This sequence belongs to the small GTPase superfamily. Rab family. As to quaternary structure, interacts with LRRK2 (via the N-terminus); this interaction is direct and stimulates kinase activity. In terms of processing, in case of Salmonella enterica serovar Typhimurium (S.typhimurium) infection, is proteolytically cleaved between Gly-41 and Val-42 by the GtgE viral protease encoded on the Gifsy-2 lysogen bacteriophage, which therefore prevents the recruitment of RAB29 to S.typhimurium-containing vacuoles. In contrast, no proteolytically cleavage is detected in S.typhi-infected cells. Ubiquitous.

The protein localises to the cell membrane. Its subcellular location is the cytoplasm. It localises to the perinuclear region. It is found in the golgi apparatus. The protein resides in the golgi apparatus membrane. The protein localises to the trans-Golgi network. Its subcellular location is the vacuole. It localises to the cytoskeleton. In terms of biological role, the small GTPases Rab are key regulators in vesicle trafficking. Essential for maintaining the integrity of the endosome-trans-Golgi network structure. Together with LRRK2, plays a role in the retrograde trafficking pathway for recycling proteins, such as mannose 6 phosphate receptor (M6PR), between lysosomes and the Golgi apparatus in a retromer-dependent manner. Recruits LRRK2 to the Golgi complex and stimulates LRRK2 kinase activity. Stimulates phosphorylation of RAB10 'Thr-73' by LRRK2. Regulates neuronal process morphology in the intact central nervous system (CNS). May play a role in the formation of typhoid toxin transport intermediates during Salmonella enterica serovar Typhi (S.typhi) epithelial cell infection. The polypeptide is Ras-related protein Rab-7L1 (RAB29) (Homo sapiens (Human)).